Consider the following 251-residue polypeptide: Triosephosphate isomerase (251 aa).

9-11 (NWK) is a substrate binding site. The Electrophile role is filled by His95. Glu167 functions as the Proton acceptor in the catalytic mechanism. Substrate-binding positions include Gly173, Ser213, and 234-235 (GG). Ser213 is modified (phosphoserine).

Belongs to the triosephosphate isomerase family. Homodimer.

It is found in the cytoplasm. The catalysed reaction is D-glyceraldehyde 3-phosphate = dihydroxyacetone phosphate. The protein operates within carbohydrate biosynthesis; gluconeogenesis. It functions in the pathway carbohydrate degradation; glycolysis; D-glyceraldehyde 3-phosphate from glycerone phosphate: step 1/1. In terms of biological role, involved in the gluconeogenesis. Catalyzes stereospecifically the conversion of dihydroxyacetone phosphate (DHAP) to D-glyceraldehyde-3-phosphate (G3P). This Bacillus mycoides (strain KBAB4) (Bacillus weihenstephanensis) protein is Triosephosphate isomerase.